Reading from the N-terminus, the 401-residue chain is Acetate kinase (401 aa).

Residue asparagine 7 coordinates Mg(2+). Lysine 14 contacts ATP. Substrate is bound at residue arginine 90. Aspartate 147 serves as the catalytic Proton donor/acceptor. ATP contacts are provided by residues histidine 207 to glycine 211, aspartate 282 to arginine 284, and glycine 331 to asparagine 335. Residue glutamate 385 coordinates Mg(2+).

It belongs to the acetokinase family. Homodimer. It depends on Mg(2+) as a cofactor. The cofactor is Mn(2+).

The protein resides in the cytoplasm. The catalysed reaction is acetate + ATP = acetyl phosphate + ADP. It functions in the pathway metabolic intermediate biosynthesis; acetyl-CoA biosynthesis; acetyl-CoA from acetate: step 1/2. Functionally, catalyzes the formation of acetyl phosphate from acetate and ATP. Can also catalyze the reverse reaction. In Clostridium acetobutylicum (strain ATCC 824 / DSM 792 / JCM 1419 / IAM 19013 / LMG 5710 / NBRC 13948 / NRRL B-527 / VKM B-1787 / 2291 / W), this protein is Acetate kinase.